The following is a 153-amino-acid chain: Large ribosomal subunit protein uL13 (153 aa).

It belongs to the universal ribosomal protein uL13 family. As to quaternary structure, part of the 50S ribosomal subunit.

In terms of biological role, this protein is one of the early assembly proteins of the 50S ribosomal subunit, although it is not seen to bind rRNA by itself. It is important during the early stages of 50S assembly. The sequence is that of Large ribosomal subunit protein uL13 from Chelativorans sp. (strain BNC1).